A 168-amino-acid polypeptide reads, in one-letter code: Putative adenylate kinase (168 aa).

Residues G10, G12, K13, T14, and T15 each contribute to the ATP site. The segment at 28 to 51 is NMP; the sequence is HLNERIREEGLDAGRDEERDSLVA. Positions 97–107 are LID; it reads DRGEPAAKAAE. R98 is a binding site for ATP.

Belongs to the adenylate kinase family. AK6 subfamily. Interacts with uS11. Not a structural component of 40S pre-ribosomes, but transiently interacts with them by binding to uS11.

It catalyses the reaction AMP + ATP = 2 ADP. The enzyme catalyses ATP + H2O = ADP + phosphate + H(+). In terms of biological role, broad-specificity nucleoside monophosphate (NMP) kinase that catalyzes the reversible transfer of the terminal phosphate group between nucleoside triphosphates and monophosphates. Also has ATPase activity. Involved in the late maturation steps of the 30S ribosomal particles, specifically 16S rRNA maturation. While NMP activity is not required for ribosome maturation, ATPase activity is. Associates transiently with small ribosomal subunit protein uS11. ATP hydrolysis breaks the interaction with uS11. May temporarily remove uS11 from the ribosome to enable a conformational change of the ribosomal RNA that is needed for the final maturation step of the small ribosomal subunit. The chain is Putative adenylate kinase from Natronomonas pharaonis (strain ATCC 35678 / DSM 2160 / CIP 103997 / JCM 8858 / NBRC 14720 / NCIMB 2260 / Gabara) (Halobacterium pharaonis).